The sequence spans 100 residues: UPF0251 protein swp_0615 (100 aa).

This sequence belongs to the UPF0251 family.

This is UPF0251 protein swp_0615 from Shewanella piezotolerans (strain WP3 / JCM 13877).